A 95-amino-acid polypeptide reads, in one-letter code: Aspartyl/glutamyl-tRNA(Asn/Gln) amidotransferase subunit C (95 aa).

This sequence belongs to the GatC family. Heterotrimer of A, B and C subunits.

The enzyme catalyses L-glutamyl-tRNA(Gln) + L-glutamine + ATP + H2O = L-glutaminyl-tRNA(Gln) + L-glutamate + ADP + phosphate + H(+). It carries out the reaction L-aspartyl-tRNA(Asn) + L-glutamine + ATP + H2O = L-asparaginyl-tRNA(Asn) + L-glutamate + ADP + phosphate + 2 H(+). In terms of biological role, allows the formation of correctly charged Asn-tRNA(Asn) or Gln-tRNA(Gln) through the transamidation of misacylated Asp-tRNA(Asn) or Glu-tRNA(Gln) in organisms which lack either or both of asparaginyl-tRNA or glutaminyl-tRNA synthetases. The reaction takes place in the presence of glutamine and ATP through an activated phospho-Asp-tRNA(Asn) or phospho-Glu-tRNA(Gln). This chain is Aspartyl/glutamyl-tRNA(Asn/Gln) amidotransferase subunit C, found in Pseudomonas fluorescens (strain SBW25).